The sequence spans 307 residues: D-alanine--D-alanine ligase (307 aa).

The region spanning 101 to 301 is the ATP-grasp domain; it reads KDVLRAAGVP…FGELVRWMVE (201 aa). 128–182 is an ATP binding site; it reads MTPPYVVKPLGEGSSFGVIIVRADQTHPPQELTRDDWAYGDLVLVERFVAGRELT. Mg(2+)-binding residues include D251, E268, and N270.

Belongs to the D-alanine--D-alanine ligase family. The cofactor is Mg(2+). Mn(2+) serves as cofactor.

The protein localises to the cytoplasm. The enzyme catalyses 2 D-alanine + ATP = D-alanyl-D-alanine + ADP + phosphate + H(+). It participates in cell wall biogenesis; peptidoglycan biosynthesis. Its function is as follows. Cell wall formation. This chain is D-alanine--D-alanine ligase, found in Methylocella silvestris (strain DSM 15510 / CIP 108128 / LMG 27833 / NCIMB 13906 / BL2).